The primary structure comprises 334 residues: Aromatic O-demethylase, reductase subunit (334 aa).

The 2Fe-2S ferredoxin-type domain maps to 1 to 91; it reads MTFAVSVGGR…DTEVRSTADA (91 aa). 4 residues coordinate [2Fe-2S] cluster: C35, C40, C43, and C75. Residues 98–198 form the FAD-binding FR-type domain; the sequence is LRDLTATVLE…TGPLGDFHLP (101 aa). FAD contacts are provided by residues 145 to 148, 162 to 164, 170 to 172, T215, F330, and S334; these read RQYS, HVR, and VAT.

As to quaternary structure, monomer. Forms a heterodimer with GcoA. It depends on FAD as a cofactor. [2Fe-2S] cluster serves as cofactor.

It carries out the reaction 2 oxidized [cytochrome P450] + NADH = 2 reduced [cytochrome P450] + NAD(+) + H(+). It participates in aromatic compound metabolism. Functionally, part of a two-component P450 system that efficiently O-demethylates diverse aromatic substrates such as guaiacol and a wide variety of lignin-derived monomers. Is likely involved in lignin degradation, allowing Amycolatopsis sp. ATCC 39116 to catabolize plant biomass. GcoB transfers electrons from NADH to the cytochrome P450 subunit GcoA. Highly prefers NADH over NADPH as the electron donor. The polypeptide is Aromatic O-demethylase, reductase subunit (Amycolatopsis sp. (strain ATCC 39116 / 75iv2)).